The primary structure comprises 324 residues: tRNA dimethylallyltransferase (324 aa).

Residue 17 to 24 (GPTASGKT) participates in ATP binding. 19 to 24 (TASGKT) provides a ligand contact to substrate. Interaction with substrate tRNA regions lie at residues 42-45 (DSAL), 166-170 (QRIQR), 251-256 (RCVGYR), and 284-291 (KRQITWLR).

It belongs to the IPP transferase family. As to quaternary structure, monomer. It depends on Mg(2+) as a cofactor.

It carries out the reaction adenosine(37) in tRNA + dimethylallyl diphosphate = N(6)-dimethylallyladenosine(37) in tRNA + diphosphate. Functionally, catalyzes the transfer of a dimethylallyl group onto the adenine at position 37 in tRNAs that read codons beginning with uridine, leading to the formation of N6-(dimethylallyl)adenosine (i(6)A). The protein is tRNA dimethylallyltransferase of Burkholderia lata (strain ATCC 17760 / DSM 23089 / LMG 22485 / NCIMB 9086 / R18194 / 383).